Reading from the N-terminus, the 283-residue chain is ATP phosphoribosyltransferase (283 aa).

This sequence belongs to the ATP phosphoribosyltransferase family. Long subfamily. It depends on Mg(2+) as a cofactor.

Its subcellular location is the cytoplasm. It carries out the reaction 1-(5-phospho-beta-D-ribosyl)-ATP + diphosphate = 5-phospho-alpha-D-ribose 1-diphosphate + ATP. The protein operates within amino-acid biosynthesis; L-histidine biosynthesis; L-histidine from 5-phospho-alpha-D-ribose 1-diphosphate: step 1/9. Feedback inhibited by histidine. In terms of biological role, catalyzes the condensation of ATP and 5-phosphoribose 1-diphosphate to form N'-(5'-phosphoribosyl)-ATP (PR-ATP). Has a crucial role in the pathway because the rate of histidine biosynthesis seems to be controlled primarily by regulation of HisG enzymatic activity. This Bifidobacterium longum (strain DJO10A) protein is ATP phosphoribosyltransferase.